Reading from the N-terminus, the 479-residue chain is Siroheme synthase (479 aa).

The interval 1–202 is precorrin-2 dehydrogenase /sirohydrochlorin ferrochelatase; sequence MNYLPIFLDL…GRDSEAEAQL (202 aa). NAD(+) contacts are provided by residues 22 to 23 and 43 to 44; these read ET and PA. The residue at position 128 (Ser-128) is a Phosphoserine. The interval 217–479 is uroporphyrinogen-III C-methyltransferase; it reads GEVYLVGAGP…TPLEAPDHLA (263 aa). An S-adenosyl-L-methionine-binding site is contributed by Pro-226. Asp-249 functions as the Proton acceptor in the catalytic mechanism. Catalysis depends on Lys-271, which acts as the Proton donor. Residues 302–304, Ile-307, 332–333, Met-384, and Gly-413 contribute to the S-adenosyl-L-methionine site; these read GGD and TA.

It in the N-terminal section; belongs to the precorrin-2 dehydrogenase / sirohydrochlorin ferrochelatase family. This sequence in the C-terminal section; belongs to the precorrin methyltransferase family.

It catalyses the reaction uroporphyrinogen III + 2 S-adenosyl-L-methionine = precorrin-2 + 2 S-adenosyl-L-homocysteine + H(+). The catalysed reaction is precorrin-2 + NAD(+) = sirohydrochlorin + NADH + 2 H(+). It carries out the reaction siroheme + 2 H(+) = sirohydrochlorin + Fe(2+). It participates in cofactor biosynthesis; adenosylcobalamin biosynthesis; precorrin-2 from uroporphyrinogen III: step 1/1. Its pathway is cofactor biosynthesis; adenosylcobalamin biosynthesis; sirohydrochlorin from precorrin-2: step 1/1. It functions in the pathway porphyrin-containing compound metabolism; siroheme biosynthesis; precorrin-2 from uroporphyrinogen III: step 1/1. The protein operates within porphyrin-containing compound metabolism; siroheme biosynthesis; siroheme from sirohydrochlorin: step 1/1. It participates in porphyrin-containing compound metabolism; siroheme biosynthesis; sirohydrochlorin from precorrin-2: step 1/1. Functionally, multifunctional enzyme that catalyzes the SAM-dependent methylations of uroporphyrinogen III at position C-2 and C-7 to form precorrin-2 via precorrin-1. Then it catalyzes the NAD-dependent ring dehydrogenation of precorrin-2 to yield sirohydrochlorin. Finally, it catalyzes the ferrochelation of sirohydrochlorin to yield siroheme. This Thiobacillus denitrificans (strain ATCC 25259 / T1) protein is Siroheme synthase.